The following is a 485-amino-acid chain: NADH-quinone oxidoreductase subunit N (485 aa).

14 helical membrane-spanning segments follow: residues 8-28, 35-55, 71-91, 105-125, 127-147, 159-179, 203-223, 235-255, 271-291, 297-317, 326-346, 373-393, 408-430, and 455-475; these read LIAL…MLSI, FLNA…LWFV, GFAM…CTFA, FYLL…ANHL, ALFL…GYAF, YTIL…LVYA, LLAG…LVPF, PAPV…GVVM, VVLG…ALSQ, LLGY…IVLQ, VGVY…VVSL, AAVM…LGFI, WWLV…RVAV, and IVVL…QPLI.

The protein belongs to the complex I subunit 2 family. As to quaternary structure, NDH-1 is composed of 13 different subunits. Subunits NuoA, H, J, K, L, M, N constitute the membrane sector of the complex.

The protein localises to the cell inner membrane. It carries out the reaction a quinone + NADH + 5 H(+)(in) = a quinol + NAD(+) + 4 H(+)(out). NDH-1 shuttles electrons from NADH, via FMN and iron-sulfur (Fe-S) centers, to quinones in the respiratory chain. The immediate electron acceptor for the enzyme in this species is believed to be ubiquinone. Couples the redox reaction to proton translocation (for every two electrons transferred, four hydrogen ions are translocated across the cytoplasmic membrane), and thus conserves the redox energy in a proton gradient. In Salmonella choleraesuis (strain SC-B67), this protein is NADH-quinone oxidoreductase subunit N.